We begin with the raw amino-acid sequence, 151 residues long: 3-dehydroquinate dehydratase (151 aa).

Y24 serves as the catalytic Proton acceptor. The substrate site is built by N76, H82, and D89. H102 serves as the catalytic Proton donor. Residues 103 to 104 (VS) and R113 contribute to the substrate site.

It belongs to the type-II 3-dehydroquinase family. In terms of assembly, homododecamer.

It carries out the reaction 3-dehydroquinate = 3-dehydroshikimate + H2O. It participates in metabolic intermediate biosynthesis; chorismate biosynthesis; chorismate from D-erythrose 4-phosphate and phosphoenolpyruvate: step 3/7. In terms of biological role, catalyzes a trans-dehydration via an enolate intermediate. This chain is 3-dehydroquinate dehydratase, found in Rhodopseudomonas palustris (strain BisA53).